The following is a 367-amino-acid chain: AdoMet-dependent heme synthase (367 aa).

A Radical SAM core domain is found at 15–238; it reads DGSPTCKLIA…TSMHLKATCA (224 aa). [4Fe-4S] cluster-binding residues include Cys31, Cys35, and Cys38.

This sequence belongs to the radical SAM superfamily. The cofactor is [4Fe-4S] cluster.

It carries out the reaction Fe-coproporphyrin III + 2 S-adenosyl-L-methionine = heme b + 2 5'-deoxyadenosine + 2 L-methionine + 2 CO2. Its pathway is porphyrin-containing compound metabolism; protoheme biosynthesis. In terms of biological role, involved in siroheme-dependent heme b biosynthesis. Catalyzes the conversion of Fe-coproporphyrin III into heme by the oxidative decarboxylation of two propionate side chains. The polypeptide is AdoMet-dependent heme synthase (Nitratidesulfovibrio vulgaris (strain ATCC 29579 / DSM 644 / CCUG 34227 / NCIMB 8303 / VKM B-1760 / Hildenborough) (Desulfovibrio vulgaris)).